The following is a 166-amino-acid chain: Protein SprT (166 aa).

The SprT-like domain maps to 19-164 (RDALARANLK…CVRCGDTLVA (146 aa)). Histidine 78 lines the Zn(2+) pocket. Glutamate 79 is an active-site residue. Histidine 82 is a Zn(2+) binding site.

Belongs to the SprT family. The cofactor is Zn(2+).

Its subcellular location is the cytoplasm. This Cronobacter sakazakii (strain ATCC BAA-894) (Enterobacter sakazakii) protein is Protein SprT.